A 441-amino-acid polypeptide reads, in one-letter code: Divalent metal cation transporter MntH (441 aa).

The next 11 membrane-spanning stretches (helical) occupy residues 41–61 (TGIAALLPFVGPAVIASIGYM), 74–94 (AAYGYRLLWVVLAANAIAMLF), 116–136 (HFPAPIVWGMWIASEIAAMAT), 141–161 (FLGGALAFALLCHLPLFAGMI), 183–203 (AAIAALVGVIGACYLGELMIA), 223–243 (AALTIAVGIIGATIMPHTLYL), 271–291 (VVVALGLAGFVNLAMVMMAAS), 311–331 (IPVLGPAAGVLFLVALLTSGV), 360–380 (AVTIAPAFAVVACGCDVTRAM), 381–401 (VASQVVLSFVLPMPMIALLIL), and 419–439 (IVAGTATVVIVGLNAYLVWAA).

Belongs to the NRAMP family.

It localises to the cell inner membrane. H(+)-stimulated, divalent metal cation uptake system. This Burkholderia ambifaria (strain ATCC BAA-244 / DSM 16087 / CCUG 44356 / LMG 19182 / AMMD) (Burkholderia cepacia (strain AMMD)) protein is Divalent metal cation transporter MntH.